A 98-amino-acid polypeptide reads, in one-letter code: MIDTEQVKKIAHLARLEITPEQEEQFTGQLSSILEYFDQLSELDTTDVPPTTRAIEIKNITRSDSMQPYPSREELLKEAPEQEGDFFKVPQILNTDEE.

It belongs to the GatC family. In terms of assembly, heterotrimer of A, B and C subunits.

It carries out the reaction L-glutamyl-tRNA(Gln) + L-glutamine + ATP + H2O = L-glutaminyl-tRNA(Gln) + L-glutamate + ADP + phosphate + H(+). The catalysed reaction is L-aspartyl-tRNA(Asn) + L-glutamine + ATP + H2O = L-asparaginyl-tRNA(Asn) + L-glutamate + ADP + phosphate + 2 H(+). Its function is as follows. Allows the formation of correctly charged Asn-tRNA(Asn) or Gln-tRNA(Gln) through the transamidation of misacylated Asp-tRNA(Asn) or Glu-tRNA(Gln) in organisms which lack either or both of asparaginyl-tRNA or glutaminyl-tRNA synthetases. The reaction takes place in the presence of glutamine and ATP through an activated phospho-Asp-tRNA(Asn) or phospho-Glu-tRNA(Gln). The sequence is that of Aspartyl/glutamyl-tRNA(Asn/Gln) amidotransferase subunit C from Gloeothece citriformis (strain PCC 7424) (Cyanothece sp. (strain PCC 7424)).